The chain runs to 254 residues: Geranylgeranylglyceryl phosphate synthase (254 aa).

Mg(2+)-binding residues include Asp-28 and Ser-53. Sn-glycerol 1-phosphate-binding positions include 172–178, 203–204, and 225–226; these read YLEAGSG, GG, and GT.

It belongs to the GGGP/HepGP synthase family. Group II subfamily. The cofactor is Mg(2+).

It is found in the cytoplasm. It carries out the reaction sn-glycerol 1-phosphate + (2E,6E,10E)-geranylgeranyl diphosphate = sn-3-O-(geranylgeranyl)glycerol 1-phosphate + diphosphate. It participates in membrane lipid metabolism; glycerophospholipid metabolism. In terms of biological role, prenyltransferase that catalyzes the transfer of the geranylgeranyl moiety of geranylgeranyl diphosphate (GGPP) to the C3 hydroxyl of sn-glycerol-1-phosphate (G1P). This reaction is the first ether-bond-formation step in the biosynthesis of archaeal membrane lipids. The polypeptide is Geranylgeranylglyceryl phosphate synthase (Methanococcus vannielii (strain ATCC 35089 / DSM 1224 / JCM 13029 / OCM 148 / SB)).